The following is a 178-amino-acid chain: Interleukin-10 (178 aa).

The first 18 residues, 1–18 (MPRSALLCCLILLAGVAA), serve as a signal peptide directing secretion. 2 disulfide bridges follow: Cys-30-Cys-126 and Cys-80-Cys-132. A glycan (N-linked (GlcNAc...) asparagine) is linked at Asn-134.

Belongs to the IL-10 family. As to quaternary structure, homodimer. Interacts with IL10RA and IL10RB.

It localises to the secreted. Functionally, major immune regulatory cytokine that acts on many cells of the immune system where it has profound anti-inflammatory functions, limiting excessive tissue disruption caused by inflammation. Mechanistically, IL10 binds to its heterotetrameric receptor comprising IL10RA and IL10RB leading to JAK1 and STAT2-mediated phosphorylation of STAT3. In turn, STAT3 translocates to the nucleus where it drives expression of anti-inflammatory mediators. Targets antigen-presenting cells (APCs) such as macrophages and monocytes and inhibits their release of pro-inflammatory cytokines including granulocyte-macrophage colony-stimulating factor /GM-CSF, granulocyte colony-stimulating factor/G-CSF, IL-1 alpha, IL-1 beta, IL-6, IL-8 and TNF-alpha. Also interferes with antigen presentation by reducing the expression of MHC-class II and co-stimulatory molecules, thereby inhibiting their ability to induce T cell activation. In addition, controls the inflammatory response of macrophages by reprogramming essential metabolic pathways including mTOR signaling. This is Interleukin-10 (IL10) from Lama glama (Llama).